A 320-amino-acid chain; its full sequence is tRNA(Ile)-lysidine synthase (320 aa).

Residue 33–38 coordinates ATP; the sequence is SGGPDS.

Belongs to the tRNA(Ile)-lysidine synthase family.

It localises to the cytoplasm. It catalyses the reaction cytidine(34) in tRNA(Ile2) + L-lysine + ATP = lysidine(34) in tRNA(Ile2) + AMP + diphosphate + H(+). Its function is as follows. Ligates lysine onto the cytidine present at position 34 of the AUA codon-specific tRNA(Ile) that contains the anticodon CAU, in an ATP-dependent manner. Cytidine is converted to lysidine, thus changing the amino acid specificity of the tRNA from methionine to isoleucine. The polypeptide is tRNA(Ile)-lysidine synthase (Mycolicibacterium paratuberculosis (strain ATCC BAA-968 / K-10) (Mycobacterium paratuberculosis)).